Reading from the N-terminus, the 173-residue chain is MTRQDLASLIRNIPDFPIPGIQFKDITTLIGNGQAFSEVIDRLHERYQNQQIDAVVGIESRGFIFSAPLAYRLGVGLVPIRKPGKLPAATYQIEYQLEYGTNRLEIHRDAFQPGARVLVIDDLLATGGTIAAACDLIEMAGGQVAELAFVIELTFLNGRERLRERPVFSLIQF.

This sequence belongs to the purine/pyrimidine phosphoribosyltransferase family. Homodimer.

It localises to the cytoplasm. The catalysed reaction is AMP + diphosphate = 5-phospho-alpha-D-ribose 1-diphosphate + adenine. It participates in purine metabolism; AMP biosynthesis via salvage pathway; AMP from adenine: step 1/1. Functionally, catalyzes a salvage reaction resulting in the formation of AMP, that is energically less costly than de novo synthesis. The polypeptide is Adenine phosphoribosyltransferase (Chloroflexus aurantiacus (strain ATCC 29366 / DSM 635 / J-10-fl)).